The primary structure comprises 339 residues: Ketol-acid reductoisomerase (NADP(+)) (339 aa).

One can recognise a KARI N-terminal Rossmann domain in the interval 1–182 (MRVYYDRDAD…GGGRAGIIET (182 aa)). NADP(+) is bound by residues 24 to 27 (YGSQ), R48, S51, T53, and 83 to 86 (DELQ). H108 is a catalytic residue. G134 lines the NADP(+) pocket. Residues 183 to 328 (TFKEECETDL…AKLRGMMPWI (146 aa)) enclose the KARI C-terminal knotted domain. Residues D191, E195, E227, and E231 each contribute to the Mg(2+) site. S252 contributes to the substrate binding site.

This sequence belongs to the ketol-acid reductoisomerase family. It depends on Mg(2+) as a cofactor.

It catalyses the reaction (2R)-2,3-dihydroxy-3-methylbutanoate + NADP(+) = (2S)-2-acetolactate + NADPH + H(+). The catalysed reaction is (2R,3R)-2,3-dihydroxy-3-methylpentanoate + NADP(+) = (S)-2-ethyl-2-hydroxy-3-oxobutanoate + NADPH + H(+). Its pathway is amino-acid biosynthesis; L-isoleucine biosynthesis; L-isoleucine from 2-oxobutanoate: step 2/4. It functions in the pathway amino-acid biosynthesis; L-valine biosynthesis; L-valine from pyruvate: step 2/4. Involved in the biosynthesis of branched-chain amino acids (BCAA). Catalyzes an alkyl-migration followed by a ketol-acid reduction of (S)-2-acetolactate (S2AL) to yield (R)-2,3-dihydroxy-isovalerate. In the isomerase reaction, S2AL is rearranged via a Mg-dependent methyl migration to produce 3-hydroxy-3-methyl-2-ketobutyrate (HMKB). In the reductase reaction, this 2-ketoacid undergoes a metal-dependent reduction by NADPH to yield (R)-2,3-dihydroxy-isovalerate. The chain is Ketol-acid reductoisomerase (NADP(+)) from Methylorubrum populi (strain ATCC BAA-705 / NCIMB 13946 / BJ001) (Methylobacterium populi).